Reading from the N-terminus, the 229-residue chain is Large ribosomal subunit protein uL1 (229 aa).

The protein belongs to the universal ribosomal protein uL1 family. As to quaternary structure, part of the 50S ribosomal subunit.

Its function is as follows. Binds directly to 23S rRNA. The L1 stalk is quite mobile in the ribosome, and is involved in E site tRNA release. Functionally, protein L1 is also a translational repressor protein, it controls the translation of the L11 operon by binding to its mRNA. In Chlorobium luteolum (strain DSM 273 / BCRC 81028 / 2530) (Pelodictyon luteolum), this protein is Large ribosomal subunit protein uL1.